The following is a 466-amino-acid chain: Uronate isomerase (466 aa).

The protein belongs to the metallo-dependent hydrolases superfamily. Uronate isomerase family.

It carries out the reaction D-glucuronate = D-fructuronate. It catalyses the reaction aldehydo-D-galacturonate = keto-D-tagaturonate. It participates in carbohydrate metabolism; pentose and glucuronate interconversion. This chain is Uronate isomerase, found in Streptococcus agalactiae serotype V (strain ATCC BAA-611 / 2603 V/R).